Here is a 328-residue protein sequence, read N- to C-terminus: Gonadotropin-releasing hormone receptor (328 aa).

Topologically, residues 1 to 38 are extracellular; that stretch reads MANSDSPEQNENHCSAINSSIPLTPGSLPTLTLSGKIR. A glycan (N-linked (GlcNAc...) asparagine) is linked at Asn-18. Residues 39-58 form a helical membrane-spanning segment; that stretch reads VTVTFFLFLLSTIFNTSFLL. The Cytoplasmic portion of the chain corresponds to 59 to 77; the sequence is KLQNWTQRKEKRKKLSRMK. The helical transmembrane segment at 78-97 threads the bilayer; sequence LLLKHLTLANLLETLIVMPL. Residues 98–115 lie on the Extracellular side of the membrane; it reads DGMWNITVQWYAGELLCK. Asn-102 carries N-linked (GlcNAc...) asparagine glycosylation. Cys-114 and Cys-196 are joined by a disulfide. A helical membrane pass occupies residues 116–137; that stretch reads VLSYLKLFSMYAPAFMMVVISL. At 138-164 the chain is on the cytoplasmic side; the sequence is DRSLAITKPLAVKSNSKLGQFMIGLAW. The chain crosses the membrane as a helical span at residues 165–184; it reads LLSSIFAGPQLYIFGMIHLA. Residues 185–212 are Extracellular-facing; sequence DDSGQTEGFSQCVTHCSFPQWWHQAFYN. The helical transmembrane segment at 213–232 threads the bilayer; sequence FFTFSCLFIIPLLIMVICNA. The Cytoplasmic segment spans residues 233–281; that stretch reads KIIFTLTRVLHQDPHKLQLNQSKNNIPRARLRTLKMTVAFATSFTVCWT. Residues 282–300 form a helical membrane-spanning segment; the sequence is PYYVLGIWYWFDPDMVNRV. Topologically, residues 301-306 are extracellular; sequence SDPVNH. The helical transmembrane segment at 307-326 threads the bilayer; it reads FFFLFAFLNPCFDPLIYGYF. The Cytoplasmic portion of the chain corresponds to 327-328; sequence SL.

It belongs to the G-protein coupled receptor 1 family.

The protein localises to the cell membrane. Receptor for gonadotropin releasing hormone (GnRH) that mediates the action of GnRH to stimulate the secretion of the gonadotropic hormones luteinizing hormone (LH) and follicle-stimulating hormone (FSH). This receptor mediates its action by association with G-proteins that activate a phosphatidylinositol-calcium second messenger system. The polypeptide is Gonadotropin-releasing hormone receptor (GNRHR) (Bos taurus (Bovine)).